Here is a 392-residue protein sequence, read N- to C-terminus: Branched-chain-amino-acid aminotransferase, mitochondrial (392 aa).

The transit peptide at 1 to 27 (MAAAALGQIWARKLLSVPWLLCGPRRY) directs the protein to the mitochondrion. Tyr168 provides a ligand contact to substrate. At Lys229 the chain carries N6-(pyridoxal phosphate)lysine. Lys321 is subject to N6-acetyllysine.

It belongs to the class-IV pyridoxal-phosphate-dependent aminotransferase family. Homodimer. Pyridoxal 5'-phosphate serves as cofactor. In terms of tissue distribution, ubiquitous.

The protein resides in the mitochondrion. It carries out the reaction L-leucine + 2-oxoglutarate = 4-methyl-2-oxopentanoate + L-glutamate. It catalyses the reaction L-isoleucine + 2-oxoglutarate = (S)-3-methyl-2-oxopentanoate + L-glutamate. The enzyme catalyses L-valine + 2-oxoglutarate = 3-methyl-2-oxobutanoate + L-glutamate. Catalyzes the first reaction in the catabolism of the essential branched chain amino acids leucine, isoleucine, and valine. May also function as a transporter of branched chain alpha-keto acids. The sequence is that of Branched-chain-amino-acid aminotransferase, mitochondrial (BCAT2) from Homo sapiens (Human).